The chain runs to 307 residues: Cyclin-dependent kinase 5 activator 1 (307 aa).

Serine 8 is subject to Phosphoserine; by CDK5. The disordered stretch occupies residues 96 to 136; the sequence is STFAQPPPAQPPAPPANQLSGSQTGVSSSVKKAPHPSVTSA. Pro residues predominate over residues 100-110; it reads QPPPAQPPAPP. A compositionally biased stretch (polar residues) spans 112–125; sequence NQLSGSQTGVSSSV. At threonine 138 the chain carries Phosphothreonine; by CDK5.

Belongs to the cyclin-dependent kinase 5 activator family. Heterodimer composed of a catalytic subunit CDK5 and a regulatory subunit CDK5R1 (p25) and macromolecular complex composed of at least CDK5, CDK5R1 (p35) and CDK5RAP1 or CDK5RAP2 or CDK5RAP3. Only the heterodimer shows kinase activity. Interacts with EPHA4 and NGEF; may mediate the activation of NGEF by EPHA4. Interacts with RASGRF2. The complex p35/CDK5 interacts with CLOCK. In terms of processing, the p35 form is proteolytically cleaved by calpain, giving rise to the p25 form. P35 has a 5 to 10 fold shorter half-life compared to p25. The conversion results in deregulation of the CDK5 kinase: p25/CDK5 kinase displays an increased and altered tau phosphorylation in comparison to the p35/CDK5 kinase in vivo. Myristoylated. A proper myristoylation signal is essential for the proper distribution of p35. Post-translationally, phosphorylation at Ser-8 and Thr-138 by CDK5 prevents calpain-mediated proteolysis. In terms of processing, ubiquitinated, leading to its degradation: degradation of p35 by proteasome results in down-regulation of CDK5 activity. During this process, CDK5 phosphorylates p35 and induces its ubiquitination and subsequent degradation. Ubiquitinated by the CRL2(FEM1B) complex, which recognizes the -Gly-Leu-Asp-Arg C-degron at the C-terminus, leading to its degradation. Brain and neuron specific.

It localises to the cell membrane. It is found in the cell projection. The protein localises to the neuron projection. Its subcellular location is the nucleus. The protein resides in the cytoplasm. It localises to the perinuclear region. It is found in the perikaryon. In terms of biological role, p35 is a neuron specific activator of CDK5. The complex p35/CDK5 is required for neurite outgrowth and cortical lamination. Involved in dendritic spine morphogenesis by mediating the EFNA1-EPHA4 signaling. Activator of TPKII. The complex p35/CDK5 participates in the regulation of the circadian clock by modulating the function of CLOCK protein: phosphorylates CLOCK at 'Thr-451' and 'Thr-461' and regulates the transcriptional activity of the CLOCK-BMAL1 heterodimer in association with altered stability and subcellular distribution. The sequence is that of Cyclin-dependent kinase 5 activator 1 (CDK5R1) from Spermophilus citellus (European ground squirrel).